The following is an 89-amino-acid chain: UPF0367 protein P9515_01381 (89 aa).

The protein belongs to the UPF0367 family.

The polypeptide is UPF0367 protein P9515_01381 (Prochlorococcus marinus (strain MIT 9515)).